The following is a 419-amino-acid chain: Glucose-1-phosphate adenylyltransferase (419 aa).

Alpha-D-glucose 1-phosphate contacts are provided by residues Tyr107, Gly172, 187-188, and Ser205; that span reads EK.

It belongs to the bacterial/plant glucose-1-phosphate adenylyltransferase family. In terms of assembly, homotetramer.

The enzyme catalyses alpha-D-glucose 1-phosphate + ATP + H(+) = ADP-alpha-D-glucose + diphosphate. It participates in glycan biosynthesis; glycogen biosynthesis. Its function is as follows. Involved in the biosynthesis of ADP-glucose, a building block required for the elongation reactions to produce glycogen. Catalyzes the reaction between ATP and alpha-D-glucose 1-phosphate (G1P) to produce pyrophosphate and ADP-Glc. This is Glucose-1-phosphate adenylyltransferase from Novosphingobium aromaticivorans (strain ATCC 700278 / DSM 12444 / CCUG 56034 / CIP 105152 / NBRC 16084 / F199).